The primary structure comprises 600 residues: Aspartate--tRNA(Asp/Asn) ligase (600 aa).

L-aspartate is bound at residue glutamate 174. The interval 198–201 (QLFK) is aspartate. Position 220 (arginine 220) interacts with L-aspartate. ATP contacts are provided by residues 220–222 (RDE) and glutamine 229. Histidine 457 provides a ligand contact to L-aspartate. Glutamate 491 contributes to the ATP binding site. Residue arginine 498 coordinates L-aspartate. 543-546 (GLDR) serves as a coordination point for ATP.

This sequence belongs to the class-II aminoacyl-tRNA synthetase family. Type 1 subfamily. As to quaternary structure, homodimer.

The protein localises to the cytoplasm. It catalyses the reaction tRNA(Asx) + L-aspartate + ATP = L-aspartyl-tRNA(Asx) + AMP + diphosphate. In terms of biological role, aspartyl-tRNA synthetase with relaxed tRNA specificity since it is able to aspartylate not only its cognate tRNA(Asp) but also tRNA(Asn). Reaction proceeds in two steps: L-aspartate is first activated by ATP to form Asp-AMP and then transferred to the acceptor end of tRNA(Asp/Asn). The protein is Aspartate--tRNA(Asp/Asn) ligase of Burkholderia vietnamiensis (strain G4 / LMG 22486) (Burkholderia cepacia (strain R1808)).